Here is a 680-residue protein sequence, read N- to C-terminus: METLESELTCPICLELFEDPLLLPCAHSLCFNCAHRILVSHCATNEPVESINAFQCPTCRHVITLSQRGLDGLKRNVTLQNIIDRFQKASVSGPNSPSETRRERAFDANTMSSAEKVLCQFCDQDPAQDAVKTCVTCEVSYCDECLKATHPNKKPFTGHRLIEPIPDSHIRGLMCLEHEDEKVNMYCVTDDQLICALCKLVGRHRDHQVAALSERYDKLKQNLESNLTNLIKRNTELETLLAKLIQTCQHVEVNASRQEAKLTEECDLLIEIIQQRRQIIGTKIKEGKVIRLRKLAQQIANCKQCLERSASLISQAEHSLKENDHARFLQTAKNITERVSMATASSQVLIPEINLNDTFDTFALDFSREKKLLECLDYLTAPNPPAIREELCTASYDTITVHWTSEDEFSVVSYELQYTIFTGQANVVNVACDGTCLLGSAGLCNSADSWMIVPNIKQNHYTVHGLQSGTKYIFTVKAINQAGSRSSEPGKLKTNSQPFRLDPKSAHRKLKVSHDNLTVERDESSSKKSHAPERFAGQGSYGVAGNVFIDSGRHYWEVVTSGSTWYAIGLAYRSAPKHEWIGKNAASWALCRCHNHWAVRHDGKETPIAPAPHLRRVGVLLDYDNGSIAFYDALSSVHLHTFHAALAQPVCPTFTVWNKCLTIVTGLPIPDHLDCTEQRP.

Residues 10 to 60 (CPICLELFEDPLLLPCAHSLCFNCAHRILVSHCATNEPVESINAFQCPTCR) form an RING-type zinc finger. 2 positions are modified to phosphoserine: Ser-92 and Ser-96. 2 consecutive B box-type zinc fingers follow at residues 116-165 (KVLC…IEPI) and 172-212 (GLMC…VAAL). Residues Cys-119, Cys-122, Cys-134, Cys-137, Cys-142, Cys-145, His-150, His-159, Cys-175, His-178, Cys-198, and His-204 each contribute to the Zn(2+) site. Positions 205-264 (RDHQVAALSERYDKLKQNLESNLTNLIKRNTELETLLAKLIQTCQHVEVNASRQEAKLTE) form a coiled coil. The COS domain maps to 320-379 (LKENDHARFLQTAKNITERVSMATASSQVLIPEINLNDTFDTFALDFSREKKLLECLDYL). Residues 384–494 (PPAIREELCT…RSSEPGKLKT (111 aa)) form the Fibronectin type-III domain. Positions 484-498 (SRSSEPGKLKTNSQP) are enriched in polar residues. 2 disordered regions span residues 484 to 503 (SRSSEPGKLKTNSQPFRLDP) and 516 to 535 (NLTVERDESSSKKSHAPERF). A B30.2/SPRY domain is found at 495 to 672 (NSQPFRLDPK…IVTGLPIPDH (178 aa)). The span at 516 to 533 (NLTVERDESSSKKSHAPE) shows a compositional bias: basic and acidic residues. Ser-524 carries the post-translational modification Phosphoserine.

This sequence belongs to the TRIM/RBCC family. As to quaternary structure, homodimer or heterodimer with MID2. Interacts with IGBP1. Phosphorylated. Ubiquitously expressed in fetus and adult. At 9 dpc-10.5 dpc, highest expression found in frontonasal processes, branchial arches and CNS. From 12.5 dpc to 16.5 dpc, high levels found in rostral part of CNS. At 14.5 dpc, begins to be highly expressed in kidney and lung. At 16.5 dpc, highly expressed in the mucosa of the hindgut and cutaneous region of the stomach.

Its subcellular location is the cytoplasm. It localises to the cytoskeleton. The catalysed reaction is S-ubiquitinyl-[E2 ubiquitin-conjugating enzyme]-L-cysteine + [acceptor protein]-L-lysine = [E2 ubiquitin-conjugating enzyme]-L-cysteine + N(6)-ubiquitinyl-[acceptor protein]-L-lysine.. In terms of biological role, has E3 ubiquitin ligase activity towards IGBP1, promoting its monoubiquitination, which results in deprotection of the catalytic subunit of protein phosphatase PP2A, and its subsequent degradation by polyubiquitination. The chain is E3 ubiquitin-protein ligase Midline-1 (Mid1) from Mus musculus (Mouse).